The primary structure comprises 540 residues: Chaperonin GroEL (540 aa).

ATP contacts are provided by residues 30–33, Lys51, 87–91, Gly415, 479–481, and Asp495; these read TLGP, DGTTT, and NAA.

Belongs to the chaperonin (HSP60) family. In terms of assembly, forms a cylinder of 14 subunits composed of two heptameric rings stacked back-to-back. Interacts with the co-chaperonin GroES.

Its subcellular location is the cytoplasm. The enzyme catalyses ATP + H2O + a folded polypeptide = ADP + phosphate + an unfolded polypeptide.. Its function is as follows. Together with its co-chaperonin GroES, plays an essential role in assisting protein folding. The GroEL-GroES system forms a nano-cage that allows encapsulation of the non-native substrate proteins and provides a physical environment optimized to promote and accelerate protein folding. The protein is Chaperonin GroEL of Pectobacterium carotovorum subsp. carotovorum (Erwinia carotovora subsp. carotovora).